The chain runs to 249 residues: Low affinity immunoglobulin gamma Fc region receptor III-A (249 aa).

A signal peptide spans 1 to 20 (MWYLLLPTALLLTVSSGVGA). Residues 21-203 (GLQKAVVNLD…SPSSFLPWHQ (183 aa)) are Extracellular-facing. Ig-like C2-type domains are found at residues 31-103 (PEWV…QLDV) and 117-188 (FQEG…LQIS). 2 disulfides stabilise this stretch: cysteine 46-cysteine 88 and cysteine 127-cysteine 171. N-linked (GlcNAc...) asparagine glycans are attached at residues asparagine 55 and asparagine 62. The N-linked (GlcNAc...) asparagine glycan is linked to asparagine 179. A helical transmembrane segment spans residues 204-224 (ITFCLLIGLLFAIDTVLYFSV). The Cytoplasmic portion of the chain corresponds to 225-249 (QRSLQSSVAVYEEPKLHWSKEPQDK). The residue at position 235 (tyrosine 235) is a Phosphotyrosine.

In terms of assembly, forms a heterooligomeric complex with ITAM-containing signaling subunits FCER1G. Interacts (via transmembrane domain) with signaling subunits; this interaction is a prerequisite for receptor complex expression on the cell surface and intracellular signal transduction. Binds the Fc region of antigen-complexed IgG. Post-translationally, N-glycosylated. In terms of processing, phosphorylated following receptor ligation.

The protein resides in the cell membrane. Receptor for the invariable Fc fragment of immunoglobulin gamma (IgG). Binds with intermediate affinity to both IgG2a and IgG2b. Can bind to IgG2a and IgG2b monomers. Does not display binding to IgG1 or IgG3. Recognizes neutralizing virus-specific IgGs displayed on the cell surface of infected cells and triggers antibody-dependent cellular cytotoxicity (ADCC). Confers protection to lethal influenza virus infection. On splenic dendritic cells, uptakes antigen immune complexes and efficiently divert them into MHC class I and II antigen presentation pathways to provide for superior priming of CD4-positive and CD8-positive T cell immune responses. Mediates neutrophil activation by IgG complexes redundantly with FCGR2A. Plays a role in promoting bone resorption by enhancing osteoclast differentiation following binding to IgG2a. Also acts as a receptor for the Fc region of immunoglobulin epsilon (IgE). Binds with low affinity to both the a and b allotypes of IgE. Has also been shown to bind to IgE allotype a only but not to allotype b. Binds aggregated IgE but not the monomeric form and bound monomeric IgG is readily displaced by IgE complexes. Binding to IgE promotes macrophage-mediated phagocytosis, antigen presentation to T cells, production of pro-inflammatory cytokines and the late phase of cutaneous allergic reactions. Mediates enhanced ADCC in response to afucosylated IgGs. The sequence is that of Low affinity immunoglobulin gamma Fc region receptor III-A from Rattus norvegicus (Rat).